Reading from the N-terminus, the 396-residue chain is Unsaturated chondroitin disaccharide hydrolase (396 aa).

Residue D113 is the Nucleophile of the active site. Residues D113, D173, G231, T233, R245, W249, S363, and S366 each coordinate substrate. D173 (proton donor) is an active-site residue.

This sequence belongs to the glycosyl hydrolase 88 family. In terms of assembly, monomer.

It catalyses the reaction beta-D-4-deoxy-Delta(4)-GlcpA-(1-&gt;3)-beta-D-GalpNAc6S + H2O = N-acetyl-beta-D-galactosamine 6-sulfate + 5-dehydro-4-deoxy-D-glucuronate. Catalyzes the hydrolysis of unsaturated hyaluronate and chondroitin disaccharides. Also degrades unsaturated heparin disaccharides. Releases 4-deoxy-4,5-didehydro D-glucuronic acid or 4-deoxy-4,5-didehydro L-iduronic acid from chondroitin disaccharides, hyaluronan disaccharides and heparin disaccharides and cleaves both glycosidic (1-&gt;3) and (1-&gt;4) bonds. Prefers sulfated glycosaminoglycans compared to unsulfated glycosaminoglycans. Probably required for mammalian cells invasion through the degradation of extracellular sulfated glycosaminoglycans such as chondroitin and hyaluronan. This chain is Unsaturated chondroitin disaccharide hydrolase (ugl), found in Streptococcus pneumoniae (strain ATCC BAA-255 / R6).